Reading from the N-terminus, the 202-residue chain is Proteasome subunit beta 1 (202 aa).

A propeptide spans 1 to 8 (removed in mature form; by autocatalysis); that stretch reads MGEVVLPG. T9 acts as the Nucleophile in catalysis.

The protein belongs to the peptidase T1B family. The 20S proteasome core is composed of 14 alpha and 14 beta subunits that assemble into four stacked heptameric rings, resulting in a barrel-shaped structure. The two inner rings, each composed of seven catalytic beta subunits, are sandwiched by two outer rings, each composed of seven alpha subunits. The catalytic chamber with the active sites is on the inside of the barrel. Has a gated structure, the ends of the cylinder being occluded by the N-termini of the alpha-subunits. Is capped at one or both ends by the proteasome regulatory ATPase, PAN.

It is found in the cytoplasm. It catalyses the reaction Cleavage of peptide bonds with very broad specificity.. Its activity is regulated as follows. The formation of the proteasomal ATPase PAN-20S proteasome complex, via the docking of the C-termini of PAN into the intersubunit pockets in the alpha-rings, triggers opening of the gate for substrate entry. Interconversion between the open-gate and close-gate conformations leads to a dynamic regulation of the 20S proteasome proteolysis activity. Component of the proteasome core, a large protease complex with broad specificity involved in protein degradation. The protein is Proteasome subunit beta 1 of Desulfurococcus amylolyticus (strain DSM 18924 / JCM 16383 / VKM B-2413 / 1221n) (Desulfurococcus kamchatkensis).